The primary structure comprises 338 residues: Phenylalanine--tRNA ligase alpha subunit (338 aa).

The disordered stretch occupies residues 71–101 (QFEEKRSSLSQQTSSSDTYQSLPDLTLPGRQ). The segment covering 78-92 (SLSQQTSSSDTYQSL) has biased composition (low complexity). Mg(2+) is bound at residue glutamate 253.

The protein belongs to the class-II aminoacyl-tRNA synthetase family. Phe-tRNA synthetase alpha subunit type 1 subfamily. In terms of assembly, tetramer of two alpha and two beta subunits. Requires Mg(2+) as cofactor.

The protein localises to the cytoplasm. The enzyme catalyses tRNA(Phe) + L-phenylalanine + ATP = L-phenylalanyl-tRNA(Phe) + AMP + diphosphate + H(+). This chain is Phenylalanine--tRNA ligase alpha subunit, found in Desulfotalea psychrophila (strain LSv54 / DSM 12343).